A 562-amino-acid polypeptide reads, in one-letter code: Pentatricopeptide repeat-containing protein At3g22670, mitochondrial (562 aa).

Residues 1–31 (MLTKLRISKLVSYTLPRRIFQRRFLVTNNTA) constitute a mitochondrion transit peptide. PPR repeat units lie at residues 165 to 199 (SGHTYNAMVDVLGKCRNFDLMWELVNEMNKNEESK), 202 to 232 (TLDTMSKVMRRLAKSGKYNKAVDAFLEMEKS), 238 to 268 (DTIAMNSLMDALVKENSIEHAHEVFLKLFDT), 272 to 306 (DARTFNILIHGFCKARKFDDARAMMDLMKVTEFTP), 307 to 341 (DVVTYTSFVEAYCKEGDFRRVNEMLEEMRENGCNP), 342 to 376 (NVVTYTIVMHSLGKSKQVAEALGVYEKMKEDGCVP), 377 to 411 (DAKFYSSLIHILSKTGRFKDAAEIFEDMTNQGVRR), 412 to 446 (DVLVYNTMISAALHHSRDEMALRLLKRMEDEEGES), 450 to 484 (NVETYAPLLKMCCHKKKMKLLGILLHHMVKNDVSI), and 485 to 519 (DVSTYILLIRGLCMSGKVEEACLFFEEAVRKGMVP).

This sequence belongs to the PPR family. P subfamily.

It localises to the mitochondrion. This Arabidopsis thaliana (Mouse-ear cress) protein is Pentatricopeptide repeat-containing protein At3g22670, mitochondrial.